The sequence spans 398 residues: Transcription termination factor 1, mitochondrial (398 aa).

The transit peptide at 1-57 (MQSLSLGQTSISKGLNYLTIMAPGNLWHMRNNFLFGSRCWMTRFSAENIFKSVSFRL) directs the protein to the mitochondrion. Interaction with DNA stretches follow at residues 169 to 170 (RS), 246 to 250 (QSTKR), 323 to 330 (AEKKFNDK), 354 to 357 (SIST), and 383 to 390 (SKKRYEAK).

It belongs to the mTERF family. Monomer. In terms of processing, phosphoprotein with mostly four phosphate groups. While the DNA-binding activity is unaffected by the phosphorylation state, only the phosphorylated form of the protein is active for termination activity. Functioning seems to be regulated by phosphorylation.

The protein localises to the mitochondrion. In terms of biological role, transcription termination factor. Binds to a 28 bp region within the tRNA(Leu(uur)) gene at a position immediately adjacent to and downstream of the 16S rRNA gene; this region comprises a tridecamer sequence critical for directing accurate termination. Binds DNA along the major grove and promotes DNA bending and partial unwinding. Promotes base flipping. Transcription termination activity appears to be polarized with highest specificity for transcripts initiated on the light strand. The protein is Transcription termination factor 1, mitochondrial (MTERF1) of Pongo abelii (Sumatran orangutan).